Consider the following 392-residue polypeptide: Protein FAM53C (392 aa).

An N-acetylmethionine modification is found at methionine 1. The segment at 76-120 (LHLRPPSPGSSPQEQSLSQVLSPEPPDPEKLPVPPAPPSKRHCRS) is disordered. The segment covering 85–97 (SSPQEQSLSQVLS) has biased composition (low complexity). A phosphoserine mark is found at serine 122 and serine 162. 2 disordered regions span residues 141 to 167 (LWTP…PKRV) and 201 to 294 (DSSH…EDPR). Residues 201 to 215 (DSSHPSAASPQSGSW) are compositionally biased toward polar residues. Residues serine 232, serine 234, serine 255, and serine 273 each carry the phosphoserine modification. Over residues 241–256 (ASRFLPSARSSPASSP) the composition is skewed to low complexity. Positions 278–294 (LDARKAGVKRRHEEDPR) are enriched in basic and acidic residues. Phosphoserine is present on serine 299.

It belongs to the FAM53 family.

The sequence is that of Protein FAM53C from Bos taurus (Bovine).